Here is an 838-residue protein sequence, read N- to C-terminus: Rab effector MyRIP (838 aa).

Positions 4–124 (KLDLSGLSNN…TQSLEWFYNN (121 aa)) constitute a RabBD domain. Residues 58–112 (KFNEHCCIRCCSPFTFLLNPKRQCLDCHYNICKSCCSYSQSERGYICAACQKSRH) form an FYVE-type zinc finger. A coiled-coil region spans residues 188–237 (ADTLTVALRVAEEAIEEAIAKAENYKDSLEKQNEARYLHEHKEELIEELA). Polar residues-rich tracts occupy residues 263-290 (QNQKSELPSPTSTQNPLATQNSHSTSQP) and 451-484 (TFTQHPPITSPSSGQYTNTETLNSDSETSPSPST). 4 disordered regions span residues 263 to 331 (QNQK…TEVE), 444 to 501 (SQHD…ETHL), 525 to 570 (NFNP…LYSA), and 681 to 838 (ERDV…EKRN). Composition is skewed to basic and acidic residues over residues 697 to 736 (NKQEDRVSEKDSGKLRPKERRESKRESKLREMEKQSERQT) and 753 to 838 (RQMK…EKRN). Residues 714-833 (KERRESKRES…DLEKKRKSIR (120 aa)) are a coiled coil.

As to quaternary structure, interacts with prkar2aa.

It is found in the cytoplasm. The protein localises to the perinuclear region. It localises to the cytoplasmic vesicle. Its subcellular location is the secretory vesicle. Its function is as follows. May link secretory vesicles to actin filaments. May function as a protein kinase A-anchoring protein (AKAP). May act as a scaffolding protein that links PKA to components of the exocytosis machinery, thus facilitating exocytosis. The protein is Rab effector MyRIP (myrip) of Danio rerio (Zebrafish).